We begin with the raw amino-acid sequence, 348 residues long: Anthranilate phosphoribosyltransferase (348 aa).

Residues Gly87, 90 to 91 (GD), Thr95, 97 to 100 (NIST), 115 to 123 (KHGNRSASG), and Ser127 contribute to the 5-phospho-alpha-D-ribose 1-diphosphate site. Residue Gly87 coordinates anthranilate. Ser99 provides a ligand contact to Mg(2+). Asn118 is an anthranilate binding site. Anthranilate is bound at residue Arg173. Residues Asp232 and Glu233 each contribute to the Mg(2+) site.

It belongs to the anthranilate phosphoribosyltransferase family. Homodimer. Mg(2+) serves as cofactor.

It carries out the reaction N-(5-phospho-beta-D-ribosyl)anthranilate + diphosphate = 5-phospho-alpha-D-ribose 1-diphosphate + anthranilate. Its pathway is amino-acid biosynthesis; L-tryptophan biosynthesis; L-tryptophan from chorismate: step 2/5. Its function is as follows. Catalyzes the transfer of the phosphoribosyl group of 5-phosphorylribose-1-pyrophosphate (PRPP) to anthranilate to yield N-(5'-phosphoribosyl)-anthranilate (PRA). The polypeptide is Anthranilate phosphoribosyltransferase (Synechococcus sp. (strain WH7803)).